The sequence spans 152 residues: UPF0178 protein Bcer98_3021 (152 aa).

It belongs to the UPF0178 family.

The protein is UPF0178 protein Bcer98_3021 of Bacillus cytotoxicus (strain DSM 22905 / CIP 110041 / 391-98 / NVH 391-98).